The following is a 227-amino-acid chain: Ribose-5-phosphate isomerase A (227 aa).

Substrate contacts are provided by residues 30–33 (TGST), 86–89 (DGAD), and 99–104 (KGMGGA). Glutamate 108 serves as the catalytic Proton acceptor. Residue lysine 126 coordinates substrate.

It belongs to the ribose 5-phosphate isomerase family. As to quaternary structure, homodimer.

The enzyme catalyses aldehydo-D-ribose 5-phosphate = D-ribulose 5-phosphate. It participates in carbohydrate degradation; pentose phosphate pathway; D-ribose 5-phosphate from D-ribulose 5-phosphate (non-oxidative stage): step 1/1. Its function is as follows. Involved in the first step of the non-oxidative branch of the pentose phosphate pathway. It catalyzes the reversible conversion of ribose-5-phosphate to ribulose 5-phosphate. Can also act on D-ribose-5-diphosphate and D-ribose-5-triphosphate as substrate. The polypeptide is Ribose-5-phosphate isomerase A (Thermus thermophilus (strain ATCC BAA-163 / DSM 7039 / HB27)).